Consider the following 1054-residue polypeptide: Translation initiation factor IF-2 (1054 aa).

2 disordered regions span residues 48–390 and 409–458; these read RSKL…LDLD and LARP…GTEP. Residues 65-76 show a composition bias toward pro residues; sequence KPPSESLPPEPP. A compositionally biased stretch (polar residues) spans 160–169; it reads SEATQKPETV. The segment covering 179–193 has biased composition (low complexity); sequence SESAAAKASGSEPSP. 2 stretches are compositionally biased toward pro residues: residues 221 to 235 and 304 to 316; these read PQKA…PSEA and PTRP…PPEP. The segment covering 365–378 has biased composition (basic residues); that stretch reads RAARVQAKRKRSRR. The segment covering 421–437 has biased composition (low complexity); sequence PPAATAAPPARPRPAAR. A tr-type G domain is found at 545–718; it reads SRPPVVTIMG…LLVADVAELQ (174 aa). Positions 554 to 561 are G1; sequence GHVDHGKT. 554-561 is a binding site for GTP; the sequence is GHVDHGKT. The segment at 579–583 is G2; that stretch reads GITQR. The segment at 604–607 is G3; that stretch reads DTPG. Residues 604–608 and 658–661 each bind GTP; these read DTPGH and NKID. A G4 region spans residues 658–661; it reads NKID. Residues 694-696 are G5; sequence SAL.

This sequence belongs to the TRAFAC class translation factor GTPase superfamily. Classic translation factor GTPase family. IF-2 subfamily.

It localises to the cytoplasm. In terms of biological role, one of the essential components for the initiation of protein synthesis. Protects formylmethionyl-tRNA from spontaneous hydrolysis and promotes its binding to the 30S ribosomal subunits. Also involved in the hydrolysis of GTP during the formation of the 70S ribosomal complex. This chain is Translation initiation factor IF-2, found in Synechococcus sp. (strain JA-2-3B'a(2-13)) (Cyanobacteria bacterium Yellowstone B-Prime).